The chain runs to 180 residues: Large ribosomal subunit protein uL6 (180 aa).

Residues 158–180 (YSGKGISYKGEKIRRKEGKTASK) are disordered.

This sequence belongs to the universal ribosomal protein uL6 family. In terms of assembly, part of the 50S ribosomal subunit.

This protein binds to the 23S rRNA, and is important in its secondary structure. It is located near the subunit interface in the base of the L7/L12 stalk, and near the tRNA binding site of the peptidyltransferase center. The polypeptide is Large ribosomal subunit protein uL6 (Mycoplasmopsis synoviae (strain 53) (Mycoplasma synoviae)).